A 257-amino-acid polypeptide reads, in one-letter code: MSKQPSLAQLKQDLADIADLNDSRLASLAADSRKGAQLLLKQIQHRLAKAEAAEQAFQARLHYERPFWARGERVAGIDEVGRGPLAGPVVTSAVILPPDFDIPLVNDSKQLTAKERERLYPLILAQAQSVSIGIGSPALIDQINIYQATRVAMQRAVLGLGLAPQQLIVDAMQIPVDVPQIRLIKGDAKSASVAAASIVAKVYRDHLMATYDELYPGYGFAQNAGYGTAEHLQGLADRGVTPIHRRTFSPVQKILQA.

The region spanning 72–257 is the RNase H type-2 domain; sequence ERVAGIDEVG…FSPVQKILQA (186 aa). Residues Asp-78, Glu-79, and Asp-170 each contribute to the a divalent metal cation site.

The protein belongs to the RNase HII family. Mn(2+) serves as cofactor. The cofactor is Mg(2+).

It is found in the cytoplasm. It carries out the reaction Endonucleolytic cleavage to 5'-phosphomonoester.. Functionally, endonuclease that specifically degrades the RNA of RNA-DNA hybrids. This is Ribonuclease HII from Levilactobacillus brevis (strain ATCC 367 / BCRC 12310 / CIP 105137 / JCM 1170 / LMG 11437 / NCIMB 947 / NCTC 947) (Lactobacillus brevis).